The following is a 194-amino-acid chain: A-type ATP synthase subunit E (194 aa).

It belongs to the V-ATPase E subunit family. In terms of assembly, has multiple subunits with at least A(3), B(3), C, D, E, F, H, I and proteolipid K(x).

It is found in the cell membrane. Its function is as follows. Component of the A-type ATP synthase that produces ATP from ADP in the presence of a proton gradient across the membrane. This chain is A-type ATP synthase subunit E, found in Saccharolobus solfataricus (strain ATCC 35092 / DSM 1617 / JCM 11322 / P2) (Sulfolobus solfataricus).